Here is a 127-residue protein sequence, read N- to C-terminus: Probable tautomerase YusQ (127 aa).

Proline 2 acts as the Proton acceptor; via imino nitrogen in catalysis.

The protein belongs to the 4-oxalocrotonate tautomerase family.

The chain is Probable tautomerase YusQ (yusQ) from Bacillus subtilis (strain 168).